A 946-amino-acid polypeptide reads, in one-letter code: Clumping factor A (946 aa).

Positions 1–39 are cleaved as a signal peptide; that stretch reads MNMKKKEKHAIRKKSIGVASVLVGTLIGFGLLSSKEADA. The YSIRK-G/S signaling motif motif lies at 9 to 20; sequence HAIRKKSIGVAS. 2 disordered regions span residues 34–199 and 528–917; these read SKEA…SNKD and FNNG…SEDE. The interval 40–542 is ligand binding A region; that stretch reads SENSVTQSDS…GSGDGIDKPV (503 aa). Positions 47–65 are enriched in low complexity; it reads SDSASNESKSNDSSSVSAA. A compositionally biased stretch (polar residues) spans 71–111; the sequence is TNVSDTKTSSNTNNGETSVAQNPAQQETTQSALTNATTEET. Composition is skewed to low complexity over residues 117 to 131 and 142 to 161; these read ATTA…ATTQ and NQTS…SVNS. The span at 162 to 199 shows a compositional bias: polar residues; the sequence is PQNSTNAENVSTTQDTSTEATPSNNESAPQSTDASNKD. Residues 546-564 show a composition bias toward acidic residues; that stretch reads QPDEPGEIEPIPEDSDSDP. Low complexity predominate over residues 565-597; that stretch reads GSDSGSDSNSDSGSDSGSDSTSDSGSDSASDSD. The segment covering 598–874 has biased composition (acidic residues); that stretch reads SASDSDSASD…DSDSESDSNS (277 aa). Residues 875–893 show a composition bias toward low complexity; sequence DSESGSNNNVVPPNSPKNG. Positions 900–909 are enriched in basic and acidic residues; sequence NEAKDSKEPL. An LPXTG sorting signal motif is present at residues 909 to 913; the sequence is LPDTG. T912 bears the Pentaglycyl murein peptidoglycan amidated threonine mark. A propeptide spans 913 to 946 (removed by sortase); sequence GSEDEANTSLIWGLLASIGSLLLFRRKKENKDKK.

Belongs to the serine-aspartate repeat-containing protein (SDr) family.

It localises to the secreted. Its subcellular location is the cell wall. Functionally, cell surface-associated protein implicated in virulence. Promotes bacterial attachment exclusively to the gamma-chain of human fibrinogen. Induces formation of bacterial clumps. This chain is Clumping factor A (clfA), found in Staphylococcus aureus (strain MW2).